The chain runs to 361 residues: METGAAELYDQALLGILQHVGNVQDFLRVLFGFLYRKTDFYRLLRHPSDRMGFPPGAAQALVLQVFKTFDHMARQDDEKRRQELEEKIRRKEEEEAKTVSAAAAEKEPVPVPVQEIEIDSTTELDGHQEVEKVQPPGPVKEMAHGSQEAEAPGAVAGAAEVPREPPILPRIQEQFQKNPDSYNGAVRENYTWSQDYTDLEVRVPVPKHVVKGKQVSVALSSSSIRVAMLEENGERVLMEGKLTHKINTESSLWSLEPGKCVLVNLSKVGEYWWNAILEGEEPIDIDKINKERSMATVDEEEQAVLDRLTFDYHQKLQGKPQSHELKVHEMLKKGWDAEGSPFRGQRFDPAMFNISPGAVQF.

The span at 87 to 97 (KIRRKEEEEAK) shows a compositional bias: basic and acidic residues. Disordered regions lie at residues 87 to 106 (KIRR…AAEK) and 124 to 158 (LDGH…VAGA). At Ser146 the chain carries Phosphoserine. Residues 148-158 (EAEAPGAVAGA) are compositionally biased toward low complexity. The CS domain maps to 185 to 277 (AVRENYTWSQ…VGEYWWNAIL (93 aa)). Phosphoserine is present on residues Ser340 and Ser355.

The polypeptide is NudC domain-containing protein 3 (NUDCD3) (Homo sapiens (Human)).